Consider the following 115-residue polypeptide: Large ribosomal subunit protein bL19 (115 aa).

Belongs to the bacterial ribosomal protein bL19 family.

This protein is located at the 30S-50S ribosomal subunit interface and may play a role in the structure and function of the aminoacyl-tRNA binding site. This Coxiella burnetii (strain CbuK_Q154) (Coxiella burnetii (strain Q154)) protein is Large ribosomal subunit protein bL19.